The sequence spans 445 residues: Glycine--tRNA ligase (445 aa).

Residues arginine 97 and glutamate 145 each coordinate substrate. Residues 177-179, 187-192, 262-263, and 308-311 contribute to the ATP site; these read RNE, FRTCEF, EV, and GLTR. 192–196 is a substrate binding site; that stretch reads FEQME. Substrate is bound at residue 304 to 308; it reads ETSAG.

The protein belongs to the class-II aminoacyl-tRNA synthetase family. As to quaternary structure, homodimer.

It is found in the cytoplasm. The catalysed reaction is tRNA(Gly) + glycine + ATP = glycyl-tRNA(Gly) + AMP + diphosphate. In terms of biological role, catalyzes the attachment of glycine to tRNA(Gly). The polypeptide is Glycine--tRNA ligase (Borreliella burgdorferi (strain ZS7) (Borrelia burgdorferi)).